The following is an 89-amino-acid chain: uncharacterized protein (89 aa).

The disordered stretch occupies residues 66–89 (RIKEQSSSSSATRTTQEPSLHLPD).

This is an uncharacterized protein from Cestrum parqui (CmYLCV).